Consider the following 382-residue polypeptide: Intermediate transcription factor 3 large subunit (382 aa).

The protein belongs to the poxviruses A23 family. In terms of assembly, heterodimer of a 45 kDa and a 32 kDa subunit.

Acts with RNA polymerase to initiate transcription from intermediate gene promoters. In Camelus, this protein is Intermediate transcription factor 3 large subunit (VITF3L).